A 243-amino-acid polypeptide reads, in one-letter code: MSGHSKWSTIKRKKAKVDAQRGKIFTRLAREIIVAARQGGGDPESNVRLKAAIQRAKEANVPNENIMRAIQKGTGELGGANYEEIIYEGYGPGGAAVMIEIMTDNRNRTAGEIRHIFARNGGSLGETGCVAWMFEEKGLIVVEKKGSEPDEDSLMLLALEAGADDFKAEEDSYEITTAPGDLQKVRGALEGAGVKIALAEVAMIPQTTVKLEGDDAERMTRLVDALEEHDDVQNVYANYEIED.

The protein belongs to the TACO1 family.

The protein localises to the cytoplasm. This is Probable transcriptional regulatory protein PTH_1024 from Pelotomaculum thermopropionicum (strain DSM 13744 / JCM 10971 / SI).